The primary structure comprises 411 residues: Probable phosphatase HAD1 (411 aa).

Residues 14-23 (LPSPNTSQPP) are compositionally biased toward polar residues. The interval 14–33 (LPSPNTSQPPSAAPSRRGSF) is disordered. D61 (nucleophile) is an active-site residue. Mg(2+)-binding residues include D61, D63, and D338. The active-site Proton donor is the D63. Residues 296-386 (PRPTPDVTPV…QSGQAGVTLD (91 aa)) are disordered. Positions 326–345 (VRNTQTIMKGSDDLTGNDSV) are enriched in polar residues. The span at 362–373 (SVEKRAEMEFHR) shows a compositional bias: basic and acidic residues.

Belongs to the HAD-like hydrolase superfamily. In terms of processing, phosphorylated.

Functionally, probable phosphatase. Required for cell wall integrity and virulence. The sequence is that of Probable phosphatase HAD1 from Cryptococcus neoformans var. grubii serotype A (strain H99 / ATCC 208821 / CBS 10515 / FGSC 9487) (Filobasidiella neoformans var. grubii).